The primary structure comprises 305 residues: Protein hrde-2 (305 aa).

2 disordered regions span residues 211–233 (AEMVPSNTTGSSGSPMSTAPVPA) and 267–305 (EMSNDEYSPDESENDENEYDYENAARYDDGYDEGHEYCQ). Positions 215 to 227 (PSNTTGSSGSPMS) are enriched in polar residues. Over residues 268 to 287 (MSNDEYSPDESENDENEYDY) the composition is skewed to acidic residues. The span at 289 to 305 (NAARYDDGYDEGHEYCQ) shows a compositional bias: basic and acidic residues.

As to expression, expressed throughout the male and female germline.

It localises to the nucleus. In terms of biological role, plays a role in germline RNA interference (RNAi), and in particular is required for piwi-interacting RNA (piRNA) gene silencing. Facilitates the binding of the argonaut protein hrde-1 to small interfering RNAs (siRNAs) targets that are required for transgenerational epigenetic inheritance and germline immortality. The chain is Protein hrde-2 from Caenorhabditis elegans.